The sequence spans 81 residues: Antitoxin VapB20 (81 aa).

In terms of biological role, antitoxin component of a type II toxin-antitoxin (TA) system. Neutralizes the toxic effect of cognate toxin VapC20. This is Antitoxin VapB20 (vapB20) from Mycobacterium tuberculosis (strain CDC 1551 / Oshkosh).